A 121-amino-acid polypeptide reads, in one-letter code: MDPNTVSSFQDILMRMSKMQLESSSEDLNGMITQFESLKLYRDSLGEAVMRMGDLHSLQNRNGKWREQLGQKFEEIRWLIEEVRHRLKITENSFEQITFMQALQLLFEVEQEIRTFSFQLI.

2 short sequence motifs (nuclear export signal) span residues 12–21 and 85–94; these read ILMRMSKMQL and HRLKITENSF.

This sequence belongs to the influenza viruses NEP family. Interacts with protein M1. May interact with host nucleoporin RAB/HRB and exportin XPO1/CRM1.

It is found in the virion. The protein resides in the host nucleus. Functionally, mediates the nuclear export of encapsidated genomic RNAs (ribonucleoproteins, RNPs). Acts as an adapter between viral RNPs complexes and the nuclear export machinery of the cell. Possesses no intrinsic RNA-binding activity, but includes a C-terminal M1-binding domain. This domain is believed to allow recognition of RNPs bound to the protein M1. Since protein M1 is not available in large quantities before late stages of infection, such an indirect recognition mechanism probably ensures that genomic RNPs are not exported from the host nucleus until sufficient quantities of viral mRNA and progeny genomic RNA have been synthesized. Furthermore, the RNPs enter the host cytoplasm only when associated with the M1 protein that is necessary to guide them to the plasma membrane. May down-regulate viral RNA synthesis when overproduced. This Influenza A virus (strain A/Hickox/1940 H1N1) protein is Nuclear export protein.